The chain runs to 198 residues: Ion-translocating oxidoreductase complex subunit B (198 aa).

Residues 1 to 26 form a hydrophobic region; it reads MTTIMIAVLAIALLATLFGAILGFAS. The region spanning 32–90 is the 4Fe-4S domain; it reads EADPIVDQIDAILPQTQCGQCGYPGCRPYAEAIANGDSINKCPPGGQATIEKLADLMGV. Residues cysteine 49, cysteine 52, cysteine 57, cysteine 73, cysteine 114, cysteine 117, cysteine 120, cysteine 124, cysteine 144, cysteine 147, cysteine 150, and cysteine 154 each contribute to the [4Fe-4S] cluster site. 2 consecutive 4Fe-4S ferredoxin-type domains span residues 105–134 and 135–164; these read KVAF…GGTK and ALHT…MIPL.

It belongs to the 4Fe4S bacterial-type ferredoxin family. RnfB subfamily. As to quaternary structure, the complex is composed of six subunits: RnfA, RnfB, RnfC, RnfD, RnfE and RnfG. [4Fe-4S] cluster is required as a cofactor.

Its subcellular location is the cell inner membrane. Functionally, part of a membrane-bound complex that couples electron transfer with translocation of ions across the membrane. The sequence is that of Ion-translocating oxidoreductase complex subunit B from Vibrio vulnificus (strain CMCP6).